Here is a 41-residue protein sequence, read N- to C-terminus: Photosystem I reaction center subunit IX (41 aa).

Residues 7–29 (YLSTAPVLLTVWLSITASGIMII) traverse the membrane as a helical segment.

This sequence belongs to the PsaJ family.

The protein resides in the plastid. It localises to the chloroplast thylakoid membrane. Functionally, may help in the organization of the PsaE and PsaF subunits. This Heterosigma akashiwo (strain NIES-293 / 8280G21-1) protein is Photosystem I reaction center subunit IX.